The sequence spans 384 residues: Urea transporter 1 (384 aa).

At E39 the chain carries Phosphoserine. 5 helical membrane-spanning segments follow: residues 61–81 (ISQV…VGLL), 85–105 (PWWA…ALLL), 111–131 (AIAA…MAVF), 138–158 (FWWL…FSSA), and 168–188 (LPVF…ATGH). N-linked (GlcNAc...) asparagine glycosylation occurs at N206. The next 4 membrane-spanning stretches (helical) occupy residues 250–270 (LMCL…LSLA), 276–296 (IYFG…GGMF), 305–325 (LLAL…AHLM), and 327–347 (VVHL…FLLL).

The protein belongs to the urea transporter family. In terms of assembly, homotrimer; each subunit contains a pore through which urea permeates. Identified in a complex with STOM. N-glycosylated in red blood cells, as well as in most non-erythroid tissues, except in the gastrocnemius muscle and in the gastrointestinal tract, including liver, colon and stomach. Expressed in brain, kidney, heart, liver, lung, skeletal muscle, spleen, testis, ureter and urinary bladder (at protein level). Along the gastrointestinal tract, detected in colon, jejunum and stomach (at protein level). In the kidney, expressed in some microvessels of the inner and outer medulla, but not all (at protein level). Not detected in the cortex (at protein level). Detected in the urothelium all along the urinary tract, including the papilla surface, the ureter, the bladder and the urethra (at protein level). In the brain, expressed at the border of the corpus callosum and striatum in astrocytic cellular processes surrounding blood microvessels (at protein level). Detected in erythrocytes (at protein level).

It is found in the cell membrane. Its subcellular location is the basolateral cell membrane. It carries out the reaction urea(in) = urea(out). Its function is as follows. Mediates the transport of urea driven by a concentration gradient across the cell membranes of erythrocytes and the renal inner medullary collecting duct which is critical to the urinary concentrating mechanism. Facilitates water transport in erythrocytes. This is Urea transporter 1 (Slc14a1) from Mus musculus (Mouse).